A 439-amino-acid polypeptide reads, in one-letter code: Xylose isomerase (439 aa).

Residues His101 and Asp104 contribute to the active site. Positions 232, 268, 271, 296, 307, 309, and 339 each coordinate Mg(2+).

The protein belongs to the xylose isomerase family. In terms of assembly, homotetramer. Mg(2+) is required as a cofactor.

The protein localises to the cytoplasm. The catalysed reaction is alpha-D-xylose = alpha-D-xylulofuranose. The polypeptide is Xylose isomerase (Photobacterium profundum (strain SS9)).